The sequence spans 413 residues: MTTEHLSQQRFADLPLHPQILAALNDQNFEYCTPIQALSLPLTLQGKDVAGQAQTGTGKTMAFLTATFHHLLTHQPDFITNQPRALILAPTRELAVQIAHDAESLAQTTKLRIALAYGGDGYDKQLKTIENGVDILIGTTGRVIDYVKQGIIRFNDIQVVVLDEADRMFDLGFIKDIRYLLRKCPAPKSRLTMLFSATLSYKVRELAFEDMNDPEYIEIEPLQKTGHRIKEELFYPSNRDKMALLMTLLEEEWPERCIIFANTKHRCEEIWGYLAADGQRVGLLTGDVAQKKRLALLKQFTDGELDILVATDVAARGLHIPDVTHVFNYDLPDDREDYVHRIGRTGRAGESGMSISFACEQYAMNLPAIEEYIGHHIPVSQYDPDSLINDLPKPYRIKRNHTIPHSSRDYKKR.

The Q motif signature appears at 9–37; sequence QRFADLPLHPQILAALNDQNFEYCTPIQA. Positions 40–217 constitute a Helicase ATP-binding domain; the sequence is LPLTLQGKDV…FEDMNDPEYI (178 aa). 53–60 serves as a coordination point for ATP; it reads AQTGTGKT. The short motif at 163–166 is the DEAD box element; the sequence is DEAD. Residues 241 to 388 form the Helicase C-terminal domain; that stretch reads KMALLMTLLE…VSQYDPDSLI (148 aa).

It belongs to the DEAD box helicase family. RhlB subfamily. In terms of assembly, component of the RNA degradosome, which is a multiprotein complex involved in RNA processing and mRNA degradation.

It localises to the cytoplasm. The enzyme catalyses ATP + H2O = ADP + phosphate + H(+). Its function is as follows. DEAD-box RNA helicase involved in RNA degradation. Has RNA-dependent ATPase activity and unwinds double-stranded RNA. This is ATP-dependent RNA helicase RhlB from Actinobacillus succinogenes (strain ATCC 55618 / DSM 22257 / CCUG 43843 / 130Z).